Here is a 395-residue protein sequence, read N- to C-terminus: MFSSRDKAEVKLYFDSNNEENQKILDQCPHLYQKYDKDVTINDRINNIEDSEPTIKNGVTFYPPYYLYNSHFMNYYGSYKIPKLNLKTRREILVNPIDGGTISLDFFELGEFKEDTPTIVINHGLTGGSHERYVQYFAQRAYKEKGFRSVVFNYRGCAGNPITADRAYSAVQLDDIKFVTEYLTKTALPLVKKWFLVGFSLGSAILVNYMADAGKDSPYLAHVSISNPMNMVECTKNLSSTYINNLIYNKGLANNLKRLFRKFDGRLDKYATKEQIMAAQTIADFDDLITSKMFGFETAHDYYLAASSSKSIRNLVKPILFINAIDDPIAPTSGFPWKDFKSNPNTILCVSRWGGHLGFISYEDHMSWSDKAAVEYLSTFLDDNNNNNDNDNKTE.

The 215-residue stretch at 117-331 (PTIVINHGLT…INAIDDPIAP (215 aa)) folds into the AB hydrolase-1 domain. Catalysis depends on charge relay system residues Ser-200, Asp-327, and His-356.

It belongs to the AB hydrolase superfamily. AB hydrolase 4 family.

The chain is Abhydrolase domain-containing protein (abhd) from Dictyostelium discoideum (Social amoeba).